Here is a 343-residue protein sequence, read N- to C-terminus: Anthranilate 1,2-dioxygenase electron transfer component (343 aa).

The 94-residue stretch at H3–S96 folds into the 2Fe-2S ferredoxin-type domain. Positions 40, 45, 48, and 80 each coordinate [2Fe-2S] cluster. Positions I98–S338 are ferredoxin-reductase. In terms of domain architecture, FAD-binding FR-type spans E103–R206.

It belongs to the bacterial ring-hydroxylating dioxygenase ferredoxin reductase family. Monomer. It is part of the anthranilate dioxygenase two component enzyme system. The other component is an oxygenase component consisting of 3 large (AntA) and 3 small (AntB) subunits. Requires FAD as cofactor. The cofactor is [2Fe-2S] cluster.

The enzyme catalyses 2 reduced [2Fe-2S]-[ferredoxin] + NAD(+) + H(+) = 2 oxidized [2Fe-2S]-[ferredoxin] + NADH. It participates in aromatic compound metabolism; anthranilate degradation via hydroxylation; catechol from anthranilate: step 1/1. Functionally, electron transfer component of anthranilate 1,2-dioxygenase system. The protein is Anthranilate 1,2-dioxygenase electron transfer component of Acinetobacter baylyi (strain ATCC 33305 / BD413 / ADP1).